A 220-amino-acid polypeptide reads, in one-letter code: MPGGLEALRALPLLLFLSYACLGPGCQALRVEGGPPSLTVNLGEEARLTCENNGRNPNITWWFSLQSNITWPPVPLGPGQGTTGQLFFPEVNKNHRGLYWCQVIENNILKRSCGTYLRVRNPVPRPFLDMGEGTKNRIITAEGIILLFCAVVPGTLLLFRKRWQNEKFGVDMPDDYEDENLYEGLNLDDCSMYEDISRGLQGTYQDVGNLHIGDAQLEKP.

The N-terminal stretch at 1 to 28 (MPGGLEALRALPLLLFLSYACLGPGCQA) is a signal peptide. An Ig-like C2-type domain is found at 29–117 (LRVEGGPPSL…ILKRSCGTYL (89 aa)). The Extracellular segment spans residues 29–137 (LRVEGGPPSL…LDMGEGTKNR (109 aa)). A disulfide bridge links C50 with C101. 2 N-linked (GlcNAc...) asparagine glycosylation sites follow: N58 and N68. The chain crosses the membrane as a helical span at residues 138-159 (IITAEGIILLFCAVVPGTLLLF). Residues 160–220 (RKRWQNEKFG…HIGDAQLEKP (61 aa)) lie on the Cytoplasmic side of the membrane. The 29-residue stretch at 171 to 199 (DMPDDYEDENLYEGLNLDDCSMYEDISRG) folds into the ITAM domain. Phosphotyrosine; by SRC-type Tyr-kinases is present on residues Y182 and Y193. An Asymmetric dimethylarginine; by PRMT1 modification is found at R198. Y204 carries the post-translational modification Phosphotyrosine; by Tyr-kinases.

Heterodimer of alpha and beta chains; disulfide-linked. Part of the B-cell antigen receptor complex where the alpha/beta chain heterodimer is non-covalently associated with an antigen-specific membrane-bound surface immunoglobulin of two heavy chains and two light chains. Interacts through its phosphorylated ITAM domain with the SH2 domains of SYK which stimulates SYK autophosphorylation and activation. Also interacts, when phosphorylated on Tyr-204, with the SH2 domain of BLNK/SLP65, bringing BLNK into proximity with SYK and allowing SYK to phosphorylate BLNK which is necessary for trafficking of the BCR to late endosomes. Interacts with Src-family tyrosine kinases including FYN and LYN, increasing their activity. Phosphorylated on tyrosine, serine and threonine residues upon B-cell activation. Phosphorylation of tyrosine residues by Src-family kinases, including LYN, is an early and essential feature of the BCR signaling cascade. The phosphorylated tyrosines serve as docking sites for SH2-domain containing kinases, leading to their activation which in turn leads to phosphorylation of downstream targets. Phosphorylation of serine and threonine residues may prevent subsequent tyrosine phosphorylation. In terms of processing, arginine methylation in the ITAM domain may interfere with the binding of SYK. It promotes signals leading to B-cell differentiation. In terms of tissue distribution, B-cells.

It localises to the cell membrane. Functionally, required in cooperation with CD79B for initiation of the signal transduction cascade activated by binding of antigen to the B-cell antigen receptor complex (BCR) which leads to internalization of the complex, trafficking to late endosomes and antigen presentation. Also required for BCR surface expression and for efficient differentiation of pro- and pre-B-cells. Stimulates SYK autophosphorylation and activation. Binds to BLNK, bringing BLNK into proximity with SYK and allowing SYK to phosphorylate BLNK. Also interacts with and increases activity of some Src-family tyrosine kinases. Represses BCR signaling during development of immature B-cells. The sequence is that of B-cell antigen receptor complex-associated protein alpha chain (Cd79a) from Mus musculus (Mouse).